The chain runs to 1258 residues: MASACGAPGPGGALGSQAPSWYHRDLSRAAAEELLARAGRDGSFLVRDSESVAGAFALCVLYQKHVHTYRILPDGEDFLAVQTSQGVPVRRFQTLGELIGLYAQPNQGLVCALLLPVEGEREPDPPDDRDASDGEDEKPPLPPRSGSTSISAPTGPSSPLPAPETPTAPAAESAPNGLSTVSHDYLKGSYGLDLEAVRGGASHLPHLTRTLATSCRRLHSEVDKVLSGLEILSKVFDQQSSPMVTRLLQQQNLPQTGEQELESLVLKLSVLKDFLSGIQKKALKALQDMSSTAPPAPQPSTRKAKTIPVQAFEVKLDVTLGDLTKIGKSQKFTLSVDVEGGRLVLLRRQRDSQEDWTTFTHDRIRQLIKSQRVQNKLGVVFEKEKDRTQRKDFIFVSARKREAFCQLLQLMKNKHSKQDEPDMISVFIGTWNMGSVPPPKNVTSWFTSKGLGKTLDEVTVTIPHDIYVFGTQENSVGDREWLDLLRGGLKELTDLDYRPIAMQSLWNIKVAVLVKPEHENRISHVSTSSVKTGIANTLGNKGAVGVSFMFNGTSFGFVNCHLTSGNEKTARRNQNYLDILRLLSLGDRQLNAFDISLRFTHLFWFGDLNYRLDMDIQEILNYISRKEFEPLLRVDQLNLEREKHKVFLRFSEEEISFPPTYRYERGSRDTYAWHKQKPTGVRTNVPSWCDRILWKSYPETHIICNSYGCTDDIVTSDHSPVFGTFEVGVTSQFISKKGLSKTSDQAYIEFESIEAIVKTASRTKFFIEFYSTCLEEYKKSFENDAQSSDNINFLKVQWSSRQLPTLKPILADIEYLQDQHLLLTVKSMDGYESYGECVVALKSMIGSTAQQFLTFLSHRGEETGNIRGSMKVRVPTERLGTRERLYEWISIDKDEAGAKSKAPSVSRGSQEPRSGSRKPAFTEASCPLSRLFEEPEKPPPTGRPPAPPRAAPREEPLTPRLKPEGAPEPEGVAAPPPKNSFNNPAYYVLEGVPHQLLPPEPPSPARAPVPSATKNKVAITVPAPQLGHHRHPRVGEGSSSDEESGGTLPPPDFPPPPLPDSAIFLPPSLDPLPGPVVRGRGGAEARGPPPPKAHPRPPLPPGPSPASTFLGEVASGDDRSCSVLQMAKTLSEVDYAPAGPARSALLPGPLELQPPRGLPSDYGRPLSFPPPRIRESIQEDLAEEAPCLQGGRASGLGEAGMSAWLRAIGLERYEEGLVHNGWDDLEFLSDITEEDLEEAGVQDPAHKRLLLDTLQLSK.

The region spanning 21–117 (WYHRDLSRAA…GLVCALLLPV (97 aa)) is the SH2 domain. The segment covering 119-132 (GEREPDPPDDRDAS) has biased composition (basic and acidic residues). Positions 119 to 180 (GEREPDPPDD…AESAPNGLST (62 aa)) are disordered. Ser-132 is subject to Phosphoserine. The span at 145 to 155 (SGSTSISAPTG) shows a compositional bias: polar residues. Residues 156 to 166 (PSSPLPAPETP) show a composition bias toward pro residues. A Phosphothreonine modification is found at Thr-165. 2 positions are modified to phosphoserine: Ser-241 and Ser-352. Tyr-886 bears the Phosphotyrosine mark. Ser-890 is modified (phosphoserine). A disordered region spans residues 897-1118 (GAKSKAPSVS…FLGEVASGDD (222 aa)). Positions 938-950 (PPPTGRPPAPPRA) are enriched in pro residues. The SH3-binding signature appears at 944-949 (PPAPPR). Positions 951–965 (APREEPLTPRLKPEG) are enriched in basic and acidic residues. Thr-958 bears the Phosphothreonine mark. The NPXY motif motif lies at 983 to 986 (NPAY). At Tyr-986 the chain carries Phosphotyrosine; by SRC. Composition is skewed to pro residues over residues 996-1007 (LLPPEPPSPARA), 1048-1059 (LPPPDFPPPPLP), and 1087-1104 (GPPP…PGPS). Position 1131 is a phosphoserine (Ser-1131). Phosphotyrosine is present on residues Tyr-1135 and Tyr-1162. An SAM domain is found at 1196–1258 (LGEAGMSAWL…LLLDTLQLSK (63 aa)). Phosphoserine is present on Ser-1257.

It belongs to the inositol 1,4,5-trisphosphate 5-phosphatase family. In terms of assembly, interacts with tyrosine phosphorylated form of SHC1. Interacts with EGFR. Upon stimulation by the EGF signaling pathway, it forms a complex with SHC1 and EGFR. Interacts with cytoskeletal protein SORBS3/vinexin, promoting its localization to the periphery of cells. Forms a complex with filamin (FLNA or FLNB), actin, GPIb (GP1BA or GP1BB) that regulates cortical and submembraneous actin. Interacts with c-Met/MET, when c-Met/MET is phosphorylated on 'Tyr-1356'. Interacts with p130Cas/BCAR1. Interacts with CENTD3/ARAP3 via its SAM domain. Interacts with c-Cbl/CBL and CAP/SORBS1. Interacts with activated EPHA2 receptor. Interacts with receptor FCGR2A. Interacts with receptor FCGR2B. Interacts with tyrosine kinase ABL1. Interacts with tyrosine kinase TEC. Interacts with CSF1R. Interacts (via N-terminus) with SH3YL1 (via SH3 domain). Interacts with FCRL6 (tyrosine phosphorylated form). Interacts (via SH2 domain) with tyrosine phosphorylated KLRC1 (via ITIM). Interacts with NEDD9/HEF1. Post-translationally, tyrosine phosphorylated by the members of the SRC family after exposure to a diverse array of extracellular stimuli such as insulin, growth factors such as EGF or PDGF, chemokines, integrin ligands and hypertonic and oxidative stress. May be phosphorylated upon IgG receptor FCGR2B-binding. Phosphorylated at Tyr-986 following cell attachment and spreading. Phosphorylated at Tyr-1162 following EGF signaling pathway stimulation. Phosphorylated at Thr-958 in response to PDGF. As to expression, widely expressed, most prominently in skeletal muscle, heart and brain. Present in platelets. Expressed in transformed myeloid cells and in primary macrophages, but not in peripheral blood monocytes.

Its subcellular location is the cytoplasm. It is found in the cytosol. The protein resides in the cytoskeleton. The protein localises to the membrane. It localises to the cell projection. Its subcellular location is the filopodium. It is found in the lamellipodium. The protein resides in the basal cell membrane. The protein localises to the nucleus. It localises to the nucleus speckle. Its subcellular location is the spindle pole. The enzyme catalyses a 1,2-diacyl-sn-glycero-3-phospho-(1D-myo-inositol-3,4,5-trisphosphate) + H2O = a 1,2-diacyl-sn-glycero-3-phospho-(1D-myo-inositol-3,4-bisphosphate) + phosphate. It catalyses the reaction 1,2-dioctanoyl-sn-glycero-3-phospho-(1D-myo-inositol-3,4,5-trisphosphate) + H2O = 1,2-dioctanoyl-sn-glycero-3-phospho-(1D-myo-inositol-3,4-bisphosphate) + phosphate. It carries out the reaction 1,2-dihexadecanoyl-sn-glycero-3-phospho-(1D-myo-inositol-3,4,5-trisphosphate) + H2O = 1,2-dihexadecanoyl-sn-glycero-3-phospho-(1D-myo-inositol-3,4-bisphosphate) + phosphate. With respect to regulation, activated upon translocation to the sites of synthesis of PtdIns(3,4,5)P3 in the membrane. Enzymatic activity is enhanced in the presence of phosphatidylserine. In terms of biological role, phosphatidylinositol (PtdIns) phosphatase that specifically hydrolyzes the 5-phosphate of phosphatidylinositol-3,4,5-trisphosphate (PtdIns(3,4,5)P3) to produce PtdIns(3,4)P2, thereby negatively regulating the PI3K (phosphoinositide 3-kinase) pathways. Required for correct mitotic spindle orientation and therefore progression of mitosis. Plays a central role in regulation of PI3K-dependent insulin signaling, although the precise molecular mechanisms and signaling pathways remain unclear. While overexpression reduces both insulin-stimulated MAP kinase and Akt activation, its absence does not affect insulin signaling or GLUT4 trafficking. Confers resistance to dietary obesity. May act by regulating AKT2, but not AKT1, phosphorylation at the plasma membrane. Part of a signaling pathway that regulates actin cytoskeleton remodeling. Required for the maintenance and dynamic remodeling of actin structures as well as in endocytosis, having a major impact on ligand-induced EGFR internalization and degradation. Participates in regulation of cortical and submembraneous actin by hydrolyzing PtdIns(3,4,5)P3 thereby regulating membrane ruffling. Regulates cell adhesion and cell spreading. Required for HGF-mediated lamellipodium formation, cell scattering and spreading. Acts as a negative regulator of EPHA2 receptor endocytosis by inhibiting via PI3K-dependent Rac1 activation. Acts as a regulator of neuritogenesis by regulating PtdIns(3,4,5)P3 level and is required to form an initial protrusive pattern, and later, maintain proper neurite outgrowth. Acts as a negative regulator of the FC-gamma-RIIA receptor (FCGR2A). Mediates signaling from the FC-gamma-RIIB receptor (FCGR2B), playing a central role in terminating signal transduction from activating immune/hematopoietic cell receptor systems. Involved in EGF signaling pathway. Upon stimulation by EGF, it is recruited by EGFR and dephosphorylates PtdIns(3,4,5)P3. Plays a negative role in regulating the PI3K-PKB pathway, possibly by inhibiting PKB activity. Down-regulates Fc-gamma-R-mediated phagocytosis in macrophages independently of INPP5D/SHIP1. In macrophages, down-regulates NF-kappa-B-dependent gene transcription by regulating macrophage colony-stimulating factor (M-CSF)-induced signaling. Plays a role in the localization of AURKA and NEDD9/HEF1 to the basolateral membrane at interphase in polarized cysts, thereby mediates cell cycle homeostasis, cell polarization and cilia assembly. Additionally promotion of cilia growth is also facilitated by hydrolysis of (PtdIns(3,4,5)P3) to PtdIns(3,4)P2. Promotes formation of apical membrane-initiation sites during the initial stages of lumen formation via Rho family-induced actin filament organization and CTNNB1 localization to cell-cell contacts. May also hydrolyze PtdIns(1,3,4,5)P4, and could thus affect the levels of the higher inositol polyphosphates like InsP6. Involved in endochondral ossification. In Homo sapiens (Human), this protein is Phosphatidylinositol 3,4,5-trisphosphate 5-phosphatase 2.